We begin with the raw amino-acid sequence, 466 residues long: 3-isopropylmalate dehydratase large subunit (466 aa).

Residues Cys347, Cys407, and Cys410 each coordinate [4Fe-4S] cluster.

It belongs to the aconitase/IPM isomerase family. LeuC type 1 subfamily. Heterodimer of LeuC and LeuD. [4Fe-4S] cluster serves as cofactor.

It catalyses the reaction (2R,3S)-3-isopropylmalate = (2S)-2-isopropylmalate. Its pathway is amino-acid biosynthesis; L-leucine biosynthesis; L-leucine from 3-methyl-2-oxobutanoate: step 2/4. In terms of biological role, catalyzes the isomerization between 2-isopropylmalate and 3-isopropylmalate, via the formation of 2-isopropylmaleate. The polypeptide is 3-isopropylmalate dehydratase large subunit (Pectobacterium carotovorum subsp. carotovorum (strain PC1)).